A 709-amino-acid polypeptide reads, in one-letter code: Glycerol kinase (709 aa).

Threonine 56 contributes to the substrate binding site. Arginine 60 lines the ATP pocket. Positions 86-110 are disordered; the sequence is KIGVSGLRRPSTAPARETPNAGDIK. The substrate site is built by arginine 201, tyrosine 258, and aspartate 386. Residues threonine 408, glycine 463, and 584-588 contribute to the ATP site; that span reads GMSRS.

Belongs to the FGGY kinase family.

It carries out the reaction glycerol + ATP = sn-glycerol 3-phosphate + ADP + H(+). It participates in polyol metabolism; glycerol degradation via glycerol kinase pathway; sn-glycerol 3-phosphate from glycerol: step 1/1. Key enzyme in the regulation of glycerol uptake and metabolism. Catalyzes the phosphorylation of glycerol to yield sn-glycerol 3-phosphate. The polypeptide is Glycerol kinase (GUT1) (Saccharomyces cerevisiae (strain ATCC 204508 / S288c) (Baker's yeast)).